The following is a 526-amino-acid chain: Maturase K (526 aa).

The protein belongs to the intron maturase 2 family. MatK subfamily.

It is found in the plastid. The protein localises to the chloroplast. Usually encoded in the trnK tRNA gene intron. Probably assists in splicing its own and other chloroplast group II introns. This Iris pseudacorus (Yellow flag) protein is Maturase K.